The primary structure comprises 624 residues: Phragmoplastin DRP1E (624 aa).

The residue at position 2 (Thr-2) is an N-acetylthreonine. The Dynamin-type G domain maps to 37–306 (WEALPTVAVV…LESVIRTRIP (270 aa)). A G1 motif region spans residues 47–54 (GGQSSGKS). 50 to 55 (SSGKSS) is a binding site for GTP. Residues 73–75 (VTR) are G2 motif. Residues 148–151 (DLPG) are G3 motif. Residues 217–220 (TKLD) form a G4 motif region. Residues 218–223 (KLDLMD) and 248–251 (NRSQ) each bind GTP. The segment at 247-250 (VNRS) is G5 motif. Residues 532–624 (FRRIASNVSA…DEIDAVAWVR (93 aa)) enclose the GED domain.

This sequence belongs to the TRAFAC class dynamin-like GTPase superfamily. Dynamin/Fzo/YdjA family. As to quaternary structure, forms homodimer and may homooligomerize and heterooligomerize to form the phragmoplastin complex. Binds to PHIP1. In terms of tissue distribution, ubiquitous.

Its subcellular location is the cytoplasm. The protein resides in the cytoskeleton. It is found in the phragmoplast. The catalysed reaction is GTP + H2O = GDP + phosphate + H(+). Microtubule-associated force-producing protein that is targeted to the tubulo-vesicular network of the forming cell plate during cytokinesis. Also plays a major role in plasma membrane maintenance and cell wall integrity with an implication in vesicular trafficking, polar cell expansion, and other aspects of plant growth and development. Has a GTPase activity. The sequence is that of Phragmoplastin DRP1E from Arabidopsis thaliana (Mouse-ear cress).